We begin with the raw amino-acid sequence, 97 residues long: Acylphosphatase (97 aa).

The Acylphosphatase-like domain maps to 11 to 97; the sequence is TYYVRVRGTV…EKRYERFEQH (87 aa). Catalysis depends on residues Arg-26 and Asn-44. The disordered stretch occupies residues 76–97; the sequence is RVTEVSGEERSTEKRYERFEQH. Residues 82–97 show a composition bias toward basic and acidic residues; the sequence is GEERSTEKRYERFEQH.

Belongs to the acylphosphatase family.

The enzyme catalyses an acyl phosphate + H2O = a carboxylate + phosphate + H(+). The chain is Acylphosphatase (acyP) from Paraburkholderia xenovorans (strain LB400).